The primary structure comprises 482 residues: MAQYYTTMNLKSRFAPSPTGYLHLGNARTALFAWLAARGAGGTFILRLEDTDQQRSPEIYERALLEDLRWFGIDWDEGPDRGGDHGPYRQMERLAVYGRYYAHLQSSGQAYACYCSADDLAAERAVQRSAGKAPRYGGRCRHLDAAARAEREAAGLLPTLRFRVPDQGTLTVPDLVWGERHYALADLGDFVIRRSDGSPAFFFANAVDDALMEVNLVLRGEDHLTNTPRQILILQALGLPVPAYGHLPLLLGADGQPLSKRYGAASLRDLRKDGYLAAALRNYLARLGHHYSATGFLDSRALAQGFALNQISRAPSHFDMVQLQHWQHEAVQSLDDAAVWNWLAPLLRGKVPMGLEMPFVAAVRANILLPGDALDWAERCFGAPALAADAVEAITGVSPEFWSVAQATLQASGGDYRRWTKALQQASGRRGKALFMPLRAALTGLTHGPELAALLPLIGEERALARLHAAARRPSTPIETTL.

Positions 16-26 match the 'HIGH' region motif; sequence PSPTGYLHLGN. Zn(2+) contacts are provided by Cys-113, Cys-115, Cys-140, and His-142. A 'KMSKS' region motif is present at residues 257–261; the sequence is PLSKR. An ATP-binding site is contributed by Lys-260.

The protein belongs to the class-I aminoacyl-tRNA synthetase family. Glutamate--tRNA ligase type 1 subfamily. As to quaternary structure, monomer. It depends on Zn(2+) as a cofactor.

It is found in the cytoplasm. The catalysed reaction is tRNA(Glu) + L-glutamate + ATP = L-glutamyl-tRNA(Glu) + AMP + diphosphate. Catalyzes the attachment of glutamate to tRNA(Glu) in a two-step reaction: glutamate is first activated by ATP to form Glu-AMP and then transferred to the acceptor end of tRNA(Glu). The sequence is that of Glutamate--tRNA ligase 2 from Acidithiobacillus ferrooxidans (strain ATCC 53993 / BNL-5-31) (Leptospirillum ferrooxidans (ATCC 53993)).